Reading from the N-terminus, the 105-residue chain is Circadian clock oscillator protein KaiB (105 aa).

It belongs to the KaiB family. May undergo a major conformational rearrangment; in the free state forms homooligomers. When bound to KaiC switches to a monomeric thioredoxin-fold (KaiB(fs)). The active oscillator complex is probably KaiC(6):KaiB(6).

Functionally, component of the KaiBC clock protein complex, which constitutes the main circadian regulator in cyanobacteria; it may modify the ATPase activity of KaiC. Its function is as follows. May be a metamorphic protein which reversibly switches between an inactive tetrameric fold and a rare, thioredoxin-like monomeric fold (KaiB(fs)). KaiB(fs) binds phospho-KaiC, and perhaps clock output effectors. This is Circadian clock oscillator protein KaiB from Prochlorococcus marinus (strain MIT 9312).